A 404-amino-acid polypeptide reads, in one-letter code: S-adenosylmethionine synthase (404 aa).

Residue H18 participates in ATP binding. Mg(2+) is bound at residue D20. K(+) is bound at residue E46. Residues E59 and Q102 each contribute to the L-methionine site. The tract at residues 102–112 (QSPEIAQGVDH) is flexible loop. Residues 178–180 (DGK), 249–250 (KF), D258, 264–265 (RK), A281, and K285 each bind ATP. Residue D258 coordinates L-methionine. K289 contacts L-methionine.

This sequence belongs to the AdoMet synthase family. As to quaternary structure, homotetramer; dimer of dimers. The cofactor is Mg(2+). Requires K(+) as cofactor.

The protein resides in the cytoplasm. It catalyses the reaction L-methionine + ATP + H2O = S-adenosyl-L-methionine + phosphate + diphosphate. The protein operates within amino-acid biosynthesis; S-adenosyl-L-methionine biosynthesis; S-adenosyl-L-methionine from L-methionine: step 1/1. In terms of biological role, catalyzes the formation of S-adenosylmethionine (AdoMet) from methionine and ATP. The overall synthetic reaction is composed of two sequential steps, AdoMet formation and the subsequent tripolyphosphate hydrolysis which occurs prior to release of AdoMet from the enzyme. The polypeptide is S-adenosylmethionine synthase (Rhodococcus jostii (strain RHA1)).